Consider the following 789-residue polypeptide: MANILRKWIESDRRELRRINRLANRVDSYQDQMAKLTDDELKAKTPEFRQRIQDGEDLDHLLPEAFAVAREGAKRVLGLFPFHVQVMGGIVLHEGNIAEMKTGEGKTLTATMPVYLNALSGKGVHVITVNEYLSERDAEEMGQLYRWLGCSVGVNGAQKSPDEKRAAYACDIMYSTNSEIGFDYLRDNMAVYKEDQVQRGLNFAIVDEVDSILIDEARTPLIISGPGTGTSKLYQQADRFVKTLKNEDDYKIDLESKTVSLTDEGIKKAEKYFNLKNLYDPENTALTHHLDQSLRANYIMLLDKDYVVNDGEVLIVDSFTGRVMEGRRFSDGLHQAIEAKEGVEIQEENKTMANITYQNLFRMYSKLAGMTGTARTEMEEFREIYNMETITIPTNRPVARVDEPDLLYPTLESKFRAVVKRIQALHEKGQPVLVGTVAVETSEYLSHLLDQQKIPHVVLNAKNHAREAEIIKNAGQVGAVTIATNMAGRGTDIKLGPGVKELGGLAVIGTERHESRRIDNQLRGRSGRQGDPGLSQFYLSLEDELMKRFGGDRIKNFLQRLQTDDDDEDVVIKSRFLTHQVESAQKRVEGNNYDSRKNVLQYDDVMREQREIIYRERQQVITEIDSLKWVLMPMVKRTIQRAIDAHTLGDKKDWKLQEIVDFAVEVLVKPDQITVGMLEGKSKDEMVDLMMDFAEQVYEEKKHQLYDDSQMLEFEKVVILRVVDAHWTDHIDAMDQFRQSVGLRGYGQQNPLVEYQTTGYRMFEQMVADIEYETTRLFMKSEIRQNVTR.

ATP-binding positions include Gln85, 103–107 (GEGKT), and Asp492.

Belongs to the SecA family. In terms of assembly, monomer and homodimer. Part of the essential Sec protein translocation apparatus which comprises SecA, SecYEG and auxiliary proteins SecDF. Other proteins may also be involved.

The protein localises to the cell membrane. It is found in the cytoplasm. The enzyme catalyses ATP + H2O + cellular proteinSide 1 = ADP + phosphate + cellular proteinSide 2.. Part of the Sec protein translocase complex. Interacts with the SecYEG preprotein conducting channel. Has a central role in coupling the hydrolysis of ATP to the transfer of proteins into and across the cell membrane, serving as an ATP-driven molecular motor driving the stepwise translocation of polypeptide chains across the membrane. The sequence is that of Protein translocase subunit SecA from Limosilactobacillus fermentum (strain NBRC 3956 / LMG 18251) (Lactobacillus fermentum).